The sequence spans 413 residues: Tyrosine--tRNA ligase (413 aa).

A 'HIGH' region motif is present at residues 55-64; sequence PTRPDLHLGH. The 'KMSKS' region signature appears at 242 to 246; it reads KMSKS. Lys245 provides a ligand contact to ATP. The S4 RNA-binding domain occupies 346-410; it reads VKLSYILREC…GKKAFRRLVK (65 aa).

This sequence belongs to the class-I aminoacyl-tRNA synthetase family. TyrS type 2 subfamily. As to quaternary structure, homodimer.

Its subcellular location is the cytoplasm. The catalysed reaction is tRNA(Tyr) + L-tyrosine + ATP = L-tyrosyl-tRNA(Tyr) + AMP + diphosphate + H(+). Catalyzes the attachment of tyrosine to tRNA(Tyr) in a two-step reaction: tyrosine is first activated by ATP to form Tyr-AMP and then transferred to the acceptor end of tRNA(Tyr). The polypeptide is Tyrosine--tRNA ligase (Synechococcus sp. (strain JA-2-3B'a(2-13)) (Cyanobacteria bacterium Yellowstone B-Prime)).